Consider the following 1175-residue polypeptide: Chromosome partition protein Smc (1175 aa).

ATP is bound at residue P32–N39. The stretch at V170–K504 forms a coiled coil. The SMC hinge domain maps to L524–L625. Coiled-coil stretches lie at residues D684 to K918 and S944 to S1022. Residues R807–D849 are disordered. The segment covering R817–R828 has biased composition (basic and acidic residues). Positions T829 to R838 are enriched in polar residues. Residues L840 to D849 show a composition bias toward basic and acidic residues.

This sequence belongs to the SMC family. In terms of assembly, homodimer.

Its subcellular location is the cytoplasm. In terms of biological role, required for chromosome condensation and partitioning. This is Chromosome partition protein Smc from Delftia acidovorans (strain DSM 14801 / SPH-1).